The following is a 352-amino-acid chain: UDP-N-acetylglucosamine--N-acetylmuramyl-(pentapeptide) pyrophosphoryl-undecaprenol N-acetylglucosamine transferase (352 aa).

Residues S195 and Q287 each contribute to the UDP-N-acetyl-alpha-D-glucosamine site.

This sequence belongs to the glycosyltransferase 28 family. MurG subfamily.

The protein resides in the cell membrane. It catalyses the reaction Mur2Ac(oyl-L-Ala-gamma-D-Glu-L-Lys-D-Ala-D-Ala)-di-trans,octa-cis-undecaprenyl diphosphate + UDP-N-acetyl-alpha-D-glucosamine = beta-D-GlcNAc-(1-&gt;4)-Mur2Ac(oyl-L-Ala-gamma-D-Glu-L-Lys-D-Ala-D-Ala)-di-trans,octa-cis-undecaprenyl diphosphate + UDP + H(+). It participates in cell wall biogenesis; peptidoglycan biosynthesis. Its function is as follows. Cell wall formation. Catalyzes the transfer of a GlcNAc subunit on undecaprenyl-pyrophosphoryl-MurNAc-pentapeptide (lipid intermediate I) to form undecaprenyl-pyrophosphoryl-MurNAc-(pentapeptide)GlcNAc (lipid intermediate II). The protein is UDP-N-acetylglucosamine--N-acetylmuramyl-(pentapeptide) pyrophosphoryl-undecaprenol N-acetylglucosamine transferase of Streptococcus pneumoniae (strain Taiwan19F-14).